The primary structure comprises 109 residues: Small ribosomal subunit protein uS10 (109 aa).

The protein belongs to the universal ribosomal protein uS10 family. Part of the 30S ribosomal subunit.

Involved in the binding of tRNA to the ribosomes. The chain is Small ribosomal subunit protein uS10 from Nanoarchaeum equitans (strain Kin4-M).